Consider the following 361-residue polypeptide: DNA replication and repair protein RecF (361 aa).

Position 30 to 37 (30 to 37 (GDNAQGKT)) interacts with ATP.

This sequence belongs to the RecF family.

The protein resides in the cytoplasm. In terms of biological role, the RecF protein is involved in DNA metabolism; it is required for DNA replication and normal SOS inducibility. RecF binds preferentially to single-stranded, linear DNA. It also seems to bind ATP. The protein is DNA replication and repair protein RecF of Clostridium novyi (strain NT).